Here is a 183-residue protein sequence, read N- to C-terminus: Caspase recruitment domain-containing protein 19 (183 aa).

The cysteines at positions 7 and 77 are disulfide-linked. One can recognise a CARD domain in the interval 8 to 99 (DRLVQDTPFL…PLHSHLPSRY (92 aa)). The chain crosses the membrane as a helical span at residues 122–142 (GPMSFLAGLGLAAGLALLLYC).

As to quaternary structure, associates with BCL10 by CARD-CARD interaction.

Its subcellular location is the endoplasmic reticulum membrane. The protein localises to the mitochondrion membrane. Its function is as follows. Plays a role in inhibiting the effects of BCL10-induced activation of NF-kappa-B. This Mus musculus (Mouse) protein is Caspase recruitment domain-containing protein 19.